The following is a 177-amino-acid chain: ATP synthase subunit delta (177 aa).

This sequence belongs to the ATPase delta chain family. As to quaternary structure, F-type ATPases have 2 components, F(1) - the catalytic core - and F(0) - the membrane proton channel. F(1) has five subunits: alpha(3), beta(3), gamma(1), delta(1), epsilon(1). F(0) has three main subunits: a(1), b(2) and c(10-14). The alpha and beta chains form an alternating ring which encloses part of the gamma chain. F(1) is attached to F(0) by a central stalk formed by the gamma and epsilon chains, while a peripheral stalk is formed by the delta and b chains.

It is found in the cell inner membrane. F(1)F(0) ATP synthase produces ATP from ADP in the presence of a proton or sodium gradient. F-type ATPases consist of two structural domains, F(1) containing the extramembraneous catalytic core and F(0) containing the membrane proton channel, linked together by a central stalk and a peripheral stalk. During catalysis, ATP synthesis in the catalytic domain of F(1) is coupled via a rotary mechanism of the central stalk subunits to proton translocation. In terms of biological role, this protein is part of the stalk that links CF(0) to CF(1). It either transmits conformational changes from CF(0) to CF(1) or is implicated in proton conduction. The chain is ATP synthase subunit delta from Shewanella amazonensis (strain ATCC BAA-1098 / SB2B).